The chain runs to 63 residues: Large ribosomal subunit protein bL28 (63 aa).

This sequence belongs to the bacterial ribosomal protein bL28 family.

In Desulfosudis oleivorans (strain DSM 6200 / JCM 39069 / Hxd3) (Desulfococcus oleovorans), this protein is Large ribosomal subunit protein bL28.